Consider the following 78-residue polypeptide: Large ribosomal subunit protein bL28 (78 aa).

A disordered region spans residues 1–25; it reads MARVCQVTGKRPMSGHHVSHANNKT. Over residues 13–25 the composition is skewed to basic residues; sequence MSGHHVSHANNKT.

This sequence belongs to the bacterial ribosomal protein bL28 family.

The polypeptide is Large ribosomal subunit protein bL28 (Nitrosomonas eutropha (strain DSM 101675 / C91 / Nm57)).